The primary structure comprises 780 residues: Gelsolin (780 aa).

The signal sequence occupies residues 1-25; the sequence is MAPYCSSLRSALLVLALCALSPSHA. Positions 28–48 are disordered; sequence ASRGRAQERAPQSRVSETRPS. The tract at residues 51–174 is actin-severing; the sequence is VVEHPEFLKA…YKKGGVASGF (124 aa). Residues 74-155 form a Gelsolin-like 1 repeat; sequence FDLVPVPPNL…EVQGFESSTF (82 aa). Tyrosine 84 carries the phosphotyrosine modification. Residues glycine 90, aspartate 91, glutamate 122, aspartate 134, glycine 139, and alanine 141 each coordinate Ca(2+). The interval 121–124 is actin-actin interfilament contact point; that stretch reads DESG. 160–167 provides a ligand contact to a 1,2-diacyl-sn-glycero-3-phospho-(1D-myo-inositol-4,5-bisphosphate); the sequence is KSGLKYKK. Residue valine 170 coordinates Ca(2+). 186 to 194 contributes to the a 1,2-diacyl-sn-glycero-3-phospho-(1D-myo-inositol-4,5-bisphosphate) binding site; it reads RLFQVKGRR. The stretch at 196 to 268 is one Gelsolin-like 2 repeat; the sequence is VRATEVPVSW…SEEGSEPEAM (73 aa). Positions 211 and 212 each coordinate Ca(2+). Cysteine 213 and cysteine 226 form a disulfide bridge. Residues glutamate 234, aspartate 284, glutamate 327, aspartate 328, and glutamate 352 each coordinate Ca(2+). The interval 244-286 is disordered; sequence GIRDNERSGRAQVHVSEEGSEPEAMLQVLGPKPDLPQGTEDTA. Residues 315–387 form a Gelsolin-like 3 repeat; it reads DENPFAQSAL…LPEGGETPLF (73 aa). Residues tyrosine 407 and tyrosine 463 each carry the phosphotyrosine modification. Residues 432-780 form an actin-binding, Ca-sensitive region; that stretch reads AAQHGMDDDG…LDRALAELAA (349 aa). The stretch at 453-534 is one Gelsolin-like 4 repeat; that stretch reads SNKVLVDPAT…VQGKEPAHLM (82 aa). Ca(2+) is bound by residues glycine 469, aspartate 470, glutamate 500, aspartate 512, glycine 517, proline 519, and threonine 549. Residues 576-640 form a Gelsolin-like 5 repeat; it reads AVEVMPKAGA…EEGSEPDGFW (65 aa). Lysine 582 is subject to N6-acetyllysine. Residues asparagine 589 and aspartate 590 each coordinate Ca(2+). Tyrosine 601 carries the phosphotyrosine modification. Glutamate 612 is a Ca(2+) binding site. Position 649 is a phosphotyrosine (tyrosine 649). The Gelsolin-like 6 repeat unit spans residues 679-754; the sequence is IEEVPGELMQ…VRQGFEPPSF (76 aa). The Ca(2+) site is built by aspartate 694, aspartate 695, and glutamate 717. A Phosphothreonine modification is found at threonine 740.

The protein belongs to the villin/gelsolin family. As to quaternary structure, binds to actin and to fibronectin. Identified in a complex composed of ACTA1, COBL, GSN and TMSB4X. Interacts with the inactive form of EIF2AK2/PKR. Interacts with FLII. In terms of processing, phosphorylated on tyrosine residues in vitro.

Its subcellular location is the secreted. It is found in the cytoplasm. It localises to the cytoskeleton. Functionally, calcium-regulated, actin-modulating protein that binds to the plus (or barbed) ends of actin monomers or filaments, preventing monomer exchange (end-blocking or capping). It can promote the assembly of monomers into filaments (nucleation) as well as sever filaments already formed. Plays a role in ciliogenesis. This chain is Gelsolin (Gsn), found in Rattus norvegicus (Rat).